The following is a 68-amino-acid chain: uncharacterized protein (68 aa).

The interval 1-42 (MHLCQNGHYYKPHRASAEKVPYLKKKKKNSRNEGKAKKKNEK) is disordered.

This is an uncharacterized protein from Saccharomyces cerevisiae (strain ATCC 204508 / S288c) (Baker's yeast).